The following is a 102-amino-acid chain: Glutaredoxin-C13 (102 aa).

In terms of domain architecture, Glutaredoxin spans 1–101; the sequence is MDKVMRMSSE…PLIKPYQSIL (101 aa). An intrachain disulfide couples C21 to C24.

Belongs to the glutaredoxin family. CC-type subfamily.

Its subcellular location is the cytoplasm. Has a glutathione-disulfide oxidoreductase activity in the presence of NADPH and glutathione reductase. Reduces low molecular weight disulfides and proteins. This is Glutaredoxin-C13 (GRXC13) from Arabidopsis thaliana (Mouse-ear cress).